An 89-amino-acid chain; its full sequence is Cell division topological specificity factor (89 aa).

It belongs to the MinE family.

Functionally, prevents the cell division inhibition by proteins MinC and MinD at internal division sites while permitting inhibition at polar sites. This ensures cell division at the proper site by restricting the formation of a division septum at the midpoint of the long axis of the cell. The chain is Cell division topological specificity factor from Legionella pneumophila (strain Paris).